The sequence spans 325 residues: tRNA(Ile)-lysidine synthase (325 aa).

An ATP-binding site is contributed by 34 to 39 (SGGQDS).

It belongs to the tRNA(Ile)-lysidine synthase family.

Its subcellular location is the cytoplasm. It carries out the reaction cytidine(34) in tRNA(Ile2) + L-lysine + ATP = lysidine(34) in tRNA(Ile2) + AMP + diphosphate + H(+). In terms of biological role, ligates lysine onto the cytidine present at position 34 of the AUA codon-specific tRNA(Ile) that contains the anticodon CAU, in an ATP-dependent manner. Cytidine is converted to lysidine, thus changing the amino acid specificity of the tRNA from methionine to isoleucine. This chain is tRNA(Ile)-lysidine synthase, found in Synechococcus sp. (strain ATCC 27144 / PCC 6301 / SAUG 1402/1) (Anacystis nidulans).